A 469-amino-acid chain; its full sequence is Ubiquitin carboxyl-terminal hydrolase MINDY-1 (469 aa).

The interval 1-85 is disordered; it reads MEHHQPEDPA…APPGPTLGTL (85 aa). Residues 34-53 are compositionally biased toward basic and acidic residues; it reads HPQDTDARDADGEAGEREPA. Ser103 carries the phosphoserine modification. Cys137 acts as the Nucleophile in catalysis. Residue His319 is the Proton acceptor of the active site. A ubiquitin-binding domain (UBD) region spans residues 388–426; sequence QVDQDYLIALSLQQQQPRGTLGLTDLELAQQLQQEEYQQ. A disordered region spans residues 428-469; sequence QAAQPVWMRTRALSPQGRGATSGRPAGERRQRPKHESDCILL. Ser441 is modified (phosphoserine). The span at 453 to 469 shows a compositional bias: basic and acidic residues; the sequence is AGERRQRPKHESDCILL.

The protein belongs to the MINDY deubiquitinase family. FAM63 subfamily.

It catalyses the reaction Thiol-dependent hydrolysis of ester, thioester, amide, peptide and isopeptide bonds formed by the C-terminal Gly of ubiquitin (a 76-residue protein attached to proteins as an intracellular targeting signal).. Functionally, hydrolase that can specifically remove 'Lys-48'-linked conjugated ubiquitin from proteins. Has exodeubiquitinase activity and has a preference for long polyubiquitin chains. May play a regulatory role at the level of protein turnover. The chain is Ubiquitin carboxyl-terminal hydrolase MINDY-1 (MINDY1) from Pongo abelii (Sumatran orangutan).